A 342-amino-acid chain; its full sequence is Farnesyl pyrophosphate synthase 2 (342 aa).

3 residues coordinate isopentenyl diphosphate: Lys-47, Arg-50, and Gln-86. Mg(2+)-binding residues include Asp-93 and Asp-97. Arg-102 is a dimethylallyl diphosphate binding site. An isopentenyl diphosphate-binding site is contributed by Arg-103. Positions 190, 191, 229, 246, and 255 each coordinate dimethylallyl diphosphate.

The protein belongs to the FPP/GGPP synthase family. Mg(2+) is required as a cofactor.

The protein localises to the cytoplasm. The enzyme catalyses isopentenyl diphosphate + dimethylallyl diphosphate = (2E)-geranyl diphosphate + diphosphate. It carries out the reaction isopentenyl diphosphate + (2E)-geranyl diphosphate = (2E,6E)-farnesyl diphosphate + diphosphate. It functions in the pathway isoprenoid biosynthesis; farnesyl diphosphate biosynthesis; farnesyl diphosphate from geranyl diphosphate and isopentenyl diphosphate: step 1/1. It participates in isoprenoid biosynthesis; geranyl diphosphate biosynthesis; geranyl diphosphate from dimethylallyl diphosphate and isopentenyl diphosphate: step 1/1. In terms of biological role, catalyzes the sequential condensation of isopentenyl pyrophosphate with the allylic pyrophosphates, dimethylallyl pyrophosphate, and then with the resultant geranylpyrophosphate to the ultimate product farnesyl pyrophosphate. This is Farnesyl pyrophosphate synthase 2 (FPS2) from Arabidopsis thaliana (Mouse-ear cress).